A 143-amino-acid chain; its full sequence is MALERTFSIVKPDAVAKNHIGAIYNRFETAGLKIVAAKMVHLSQEKAEGFYAEHSERPFFGALVSFMTSGPVMVTVLEGENAVLKNREIMGATNPADALAGTLRADYADSIDENAVHGSDAVESAAREIAYFFADEELCSRTR.

ATP-binding residues include lysine 11, phenylalanine 59, arginine 87, threonine 93, arginine 104, and asparagine 114. The active-site Pros-phosphohistidine intermediate is the histidine 117.

Belongs to the NDK family. As to quaternary structure, homotetramer. It depends on Mg(2+) as a cofactor.

The protein resides in the cytoplasm. It carries out the reaction a 2'-deoxyribonucleoside 5'-diphosphate + ATP = a 2'-deoxyribonucleoside 5'-triphosphate + ADP. The enzyme catalyses a ribonucleoside 5'-diphosphate + ATP = a ribonucleoside 5'-triphosphate + ADP. Major role in the synthesis of nucleoside triphosphates other than ATP. The ATP gamma phosphate is transferred to the NDP beta phosphate via a ping-pong mechanism, using a phosphorylated active-site intermediate. The sequence is that of Nucleoside diphosphate kinase from Pseudoalteromonas translucida (strain TAC 125).